The chain runs to 737 residues: Delta and Notch-like epidermal growth factor-related receptor (737 aa).

The first 34 residues, Met-1 to Ala-34, serve as a signal peptide directing secretion. Over Asn-35–Tyr-640 the chain is Extracellular. 2 consecutive EGF-like domains span residues Ala-44 to Gln-92 and Val-94 to Glu-133. Positions Ala-44–Glu-133 are interaction with NOTCH1. 6 disulfides stabilise this stretch: Cys-48–Cys-59, Cys-53–Cys-80, Cys-82–Cys-91, Cys-98–Cys-108, Cys-103–Cys-121, and Cys-123–Cys-132. Asn-223 is a glycosylation site (N-linked (GlcNAc...) asparagine). 5 consecutive EGF-like domains span residues Pro-309–Glu-348, Glu-349–Gln-390, Lys-392–Glu-428, Lys-430–Ala-466, and Leu-468–Glu-503. Intrachain disulfides connect Cys-319–Cys-336, Cys-338–Cys-347, Cys-353–Cys-364, Cys-358–Cys-378, Cys-380–Cys-389, Cys-396–Cys-407, Cys-401–Cys-416, Cys-418–Cys-427, Cys-434–Cys-445, Cys-439–Cys-454, Cys-456–Cys-465, Cys-472–Cys-482, Cys-477–Cys-491, Cys-493–Cys-502, Cys-509–Cys-520, Cys-514–Cys-529, Cys-531–Cys-540, Cys-547–Cys-558, Cys-552–Cys-567, Cys-569–Cys-578, Cys-585–Cys-596, Cys-590–Cys-605, and Cys-607–Cys-616. Residues Glu-505–Glu-541 enclose the EGF-like 8; calcium-binding domain. The EGF-like 9 domain occupies Tyr-543–Asp-579. Residues Pro-546–Ile-568 enclose the Follistatin-like domain. Residue Asn-564 is glycosylated (N-linked (GlcNAc...) asparagine). The EGF-like 10; calcium-binding domain occupies Asp-581–Glu-617. The chain crosses the membrane as a helical span at residues Ile-641–Ile-661. The Cytoplasmic segment spans residues Cys-662 to Leu-737. The tract at residues Tyr-677–Phe-680 is interaction with AP1G1 and somatodendritic targeting. Residue Ser-685 is modified to Phosphoserine. 2 positions are modified to phosphotyrosine: Tyr-711 and Tyr-721. Ser-722 carries the phosphoserine modification.

Interacts with AP1G1. Interacts with NOTCH1. In terms of tissue distribution, expressed in brain, spinal cord and adrenal gland.

It is found in the cell membrane. Its function is as follows. Activator of the NOTCH1 pathway. May mediate neuron-glia interaction during astrocytogenesis. In Homo sapiens (Human), this protein is Delta and Notch-like epidermal growth factor-related receptor (DNER).